Reading from the N-terminus, the 268-residue chain is Ubiquinone/menaquinone biosynthesis C-methyltransferase UbiE (268 aa).

Positions 1–23 (MTDQHAFATEQVQLDPTLSPTTE) are disordered. Residues 10 to 23 (EQVQLDPTLSPTTE) show a composition bias toward polar residues. Residues threonine 91, aspartate 112, 140–141 (NA), and serine 157 each bind S-adenosyl-L-methionine.

It belongs to the class I-like SAM-binding methyltransferase superfamily. MenG/UbiE family.

It carries out the reaction a 2-demethylmenaquinol + S-adenosyl-L-methionine = a menaquinol + S-adenosyl-L-homocysteine + H(+). The enzyme catalyses a 2-methoxy-6-(all-trans-polyprenyl)benzene-1,4-diol + S-adenosyl-L-methionine = a 5-methoxy-2-methyl-3-(all-trans-polyprenyl)benzene-1,4-diol + S-adenosyl-L-homocysteine + H(+). Its pathway is quinol/quinone metabolism; menaquinone biosynthesis; menaquinol from 1,4-dihydroxy-2-naphthoate: step 2/2. The protein operates within cofactor biosynthesis; ubiquinone biosynthesis. Methyltransferase required for the conversion of demethylmenaquinol (DMKH2) to menaquinol (MKH2) and the conversion of 2-polyprenyl-6-methoxy-1,4-benzoquinol (DDMQH2) to 2-polyprenyl-3-methyl-6-methoxy-1,4-benzoquinol (DMQH2). The protein is Ubiquinone/menaquinone biosynthesis C-methyltransferase UbiE of Pasteurella multocida (strain Pm70).